A 122-amino-acid polypeptide reads, in one-letter code: Large ribosomal subunit protein uL14 (122 aa).

This sequence belongs to the universal ribosomal protein uL14 family. As to quaternary structure, part of the 50S ribosomal subunit. Forms a cluster with proteins L3 and L19. In the 70S ribosome, L14 and L19 interact and together make contacts with the 16S rRNA in bridges B5 and B8.

Its function is as follows. Binds to 23S rRNA. Forms part of two intersubunit bridges in the 70S ribosome. This is Large ribosomal subunit protein uL14 from Ectopseudomonas mendocina (strain ymp) (Pseudomonas mendocina).